The following is a 156-amino-acid chain: MILTVKPLQGKECSVQVTEDEKVSTVKELVSERLNIPANQQRLLYKGKALSDEHRLSDYSIGPEAKLNLVIRPVGERTGASGTAASSSSSSQGRVWQTVSTILARHFSPADAAKVHEQLIKDYERSLRQLSLDDIERLAGRLLHPDGEGMDTSYMD.

Positions 1–76 (MILTVKPLQG…LNLVIRPVGE (76 aa)) constitute a Ubiquitin-like domain.

As to quaternary structure, component of the bag6/bat3 complex.

Its subcellular location is the cytoplasm. It localises to the cytosol. The protein localises to the nucleus. In terms of biological role, as part of a cytosolic protein quality control complex, the bag6/bat3 complex, maintains misfolded and hydrophobic patches-containing proteins in a soluble state and participates in their proper delivery to the endoplasmic reticulum or alternatively can promote their sorting to the proteasome where they undergo degradation. The bag6/bat3 complex is involved in the post-translational delivery of tail-anchored/type II transmembrane proteins to the endoplasmic reticulum membrane. Similarly, the bag6/bat3 complex also functions as a sorting platform for proteins of the secretory pathway that are mislocalized to the cytosol either delivering them to the proteasome for degradation or to the endoplasmic reticulum. The bag6/bat3 complex also plays a role in the endoplasmic reticulum-associated degradation (ERAD), a quality control mechanism that eliminates unwanted proteins of the endoplasmic reticulum through their retrotranslocation to the cytosol and their targeting to the proteasome. It maintains these retrotranslocated proteins in an unfolded yet soluble state condition in the cytosol to ensure their proper delivery to the proteasome. This chain is Ubiquitin-like protein 4A (ubl4a), found in Anoplopoma fimbria (Sablefish).